Reading from the N-terminus, the 254-residue chain is Phosphoribosylaminoimidazole-succinocarboxamide synthase (254 aa).

Belongs to the SAICAR synthetase family.

It carries out the reaction 5-amino-1-(5-phospho-D-ribosyl)imidazole-4-carboxylate + L-aspartate + ATP = (2S)-2-[5-amino-1-(5-phospho-beta-D-ribosyl)imidazole-4-carboxamido]succinate + ADP + phosphate + 2 H(+). It functions in the pathway purine metabolism; IMP biosynthesis via de novo pathway; 5-amino-1-(5-phospho-D-ribosyl)imidazole-4-carboxamide from 5-amino-1-(5-phospho-D-ribosyl)imidazole-4-carboxylate: step 1/2. This Brucella melitensis biotype 2 (strain ATCC 23457) protein is Phosphoribosylaminoimidazole-succinocarboxamide synthase.